The chain runs to 458 residues: Exodeoxyribonuclease 7 large subunit (458 aa).

The protein belongs to the XseA family. As to quaternary structure, heterooligomer composed of large and small subunits.

Its subcellular location is the cytoplasm. It catalyses the reaction Exonucleolytic cleavage in either 5'- to 3'- or 3'- to 5'-direction to yield nucleoside 5'-phosphates.. In terms of biological role, bidirectionally degrades single-stranded DNA into large acid-insoluble oligonucleotides, which are then degraded further into small acid-soluble oligonucleotides. The protein is Exodeoxyribonuclease 7 large subunit of Stutzerimonas stutzeri (strain A1501) (Pseudomonas stutzeri).